The sequence spans 246 residues: MMVPQQGAVVKLDALAFAYPGGQAMRFDLLVPASEIVALMGPSGSGKSTLLNLIAGFERPDSGQVLIGSGDVTRLPPFKRPVSMIFQENNLFSHLTVEQNVGLGRSPTLRLSDGDRAAVSEAIARTGLAGKEQRLPRQLSGGERQRVALARVLVRRQPVLLLDEPFASLGPALRDEMLDLVAELHRDQQMTVIMATHDPRDAERLSNRLLFIENGTIAADGATSSFLAGQGPPAFARYLGERKRLR.

The ABC transporter domain occupies 10–239 (VKLDALAFAY…QGPPAFARYL (230 aa)). Residue 41–48 (GPSGSGKS) participates in ATP binding.

The protein belongs to the ABC transporter superfamily. Thiamine importer (TC 3.A.1.19.1) family. The complex is composed of two ATP-binding proteins (ThiQ), two transmembrane proteins (ThiP) and a solute-binding protein (ThiB).

Its subcellular location is the cell inner membrane. It catalyses the reaction thiamine(out) + ATP + H2O = thiamine(in) + ADP + phosphate + H(+). Part of the ABC transporter complex ThiBPQ involved in thiamine import. Responsible for energy coupling to the transport system. In Chelativorans sp. (strain BNC1), this protein is Thiamine import ATP-binding protein ThiQ.